The primary structure comprises 458 residues: 5-hydroxytryptamine receptor 2C (458 aa).

A signal peptide spans methionine 1 to alanine 32. Residues isoleucine 33–tryptophan 55 are Extracellular-facing. Residues proline 56–methionine 80 traverse the membrane as a helical segment. Over glutamate 81 to asparagine 86 the chain is Cytoplasmic. The chain crosses the membrane as a helical span at residues alanine 87 to leucine 111. Residues leucine 112–proline 128 lie on the Extracellular side of the membrane. An intrachain disulfide couples cysteine 127 to cysteine 207. The helical transmembrane segment at valine 129–aspartate 151 threads the bilayer. Threonine 139 contributes to the ergotamine binding site. The short motif at aspartate 151–tyrosine 153 is the DRY motif; important for ligand-induced conformation changes element. Residues arginine 152–serine 167 lie on the Cytoplasmic side of the membrane. The helical transmembrane segment at arginine 168–isoleucine 189 threads the bilayer. The Extracellular portion of the chain corresponds to proline 190–asparagine 213. Leucine 209 provides a ligand contact to ergotamine. The helical transmembrane segment at phenylalanine 214–leucine 236 threads the bilayer. At threonine 237–lysine 311 the chain is on the cytoplasmic side. A disordered region spans residues glutamate 274 to glutamine 301. Residues arginine 287 to arginine 297 are compositionally biased toward basic residues. A helical membrane pass occupies residues valine 312 to leucine 336. Cysteines 337 and 341 form a disulfide. Over cysteine 337 to glutamate 347 the chain is Extracellular. The chain crosses the membrane as a helical span at residues lysine 348–leucine 370. The NPxxY motif; important for ligand-induced conformation changes and signaling motif lies at asparagine 364–tyrosine 368. Residues phenylalanine 371 to valine 458 lie on the Cytoplasmic side of the membrane. Residues serine 456 to valine 458 carry the PDZ-binding motif.

It belongs to the G-protein coupled receptor 1 family. As to quaternary structure, interacts with MPDZ. Interacts with ARRB2. Interacts with MPP3; this interaction stabilizes the receptor at the plasma membrane and prevents the desensitization of the HTR2C receptor-mediated calcium response.

The protein resides in the cell membrane. In terms of biological role, G-protein coupled receptor for 5-hydroxytryptamine (serotonin). Also functions as a receptor for various drugs and psychoactive substances, including ergot alkaloid derivatives, 1-2,5,-dimethoxy-4-iodophenyl-2-aminopropane (DOI) and lysergic acid diethylamide (LSD). Ligand binding causes a conformation change that triggers signaling via guanine nucleotide-binding proteins (G proteins) and modulates the activity of downstream effectors. HTR2C is coupled to G(q)/G(11) G alpha proteins and activates phospholipase C-beta, releasing diacylglycerol (DAG) and inositol 1,4,5-trisphosphate (IP3) second messengers that modulate the activity of phosphatidylinositol 3-kinase and promote the release of Ca(2+) ions from intracellular stores, respectively. Beta-arrestin family members inhibit signaling via G proteins and mediate activation of alternative signaling pathways. Regulates neuronal activity via the activation of short transient receptor potential calcium channels in the brain, and thereby modulates the activation of pro-opiomelanocortin neurons and the release of CRH that then regulates the release of corticosterone. Plays a role in the regulation of appetite and eating behavior, responses to anxiogenic stimuli and stress. Plays a role in insulin sensitivity and glucose homeostasis. The polypeptide is 5-hydroxytryptamine receptor 2C (Pan troglodytes (Chimpanzee)).